The sequence spans 114 residues: Phosphoribosyl-AMP cyclohydrolase (114 aa).

Mg(2+) is bound at residue Asp-76. Residue Cys-77 participates in Zn(2+) binding. Positions 78 and 80 each coordinate Mg(2+). Zn(2+)-binding residues include Cys-93 and Cys-100.

The protein belongs to the PRA-CH family. Homodimer. It depends on Mg(2+) as a cofactor. Requires Zn(2+) as cofactor.

The protein localises to the cytoplasm. It catalyses the reaction 1-(5-phospho-beta-D-ribosyl)-5'-AMP + H2O = 1-(5-phospho-beta-D-ribosyl)-5-[(5-phospho-beta-D-ribosylamino)methylideneamino]imidazole-4-carboxamide. It functions in the pathway amino-acid biosynthesis; L-histidine biosynthesis; L-histidine from 5-phospho-alpha-D-ribose 1-diphosphate: step 3/9. Its function is as follows. Catalyzes the hydrolysis of the adenine ring of phosphoribosyl-AMP. The protein is Phosphoribosyl-AMP cyclohydrolase of Streptococcus sanguinis (strain SK36).